Reading from the N-terminus, the 310-residue chain is ADP-L-glycero-D-manno-heptose-6-epimerase (310 aa).

Residues 10–11 (FI), 31–32 (DN), lysine 38, lysine 53, 75–79 (EGACS), and asparagine 92 contribute to the NADP(+) site. The active-site Proton acceptor is tyrosine 140. Lysine 144 contributes to the NADP(+) binding site. Asparagine 169 serves as a coordination point for substrate. 2 residues coordinate NADP(+): valine 170 and lysine 178. Lysine 178 (proton acceptor) is an active-site residue. Substrate contacts are provided by residues serine 180, histidine 187, 201 to 204 (FEGS), arginine 209, and tyrosine 272.

This sequence belongs to the NAD(P)-dependent epimerase/dehydratase family. HldD subfamily. In terms of assembly, homopentamer. It depends on NADP(+) as a cofactor.

The catalysed reaction is ADP-D-glycero-beta-D-manno-heptose = ADP-L-glycero-beta-D-manno-heptose. It participates in nucleotide-sugar biosynthesis; ADP-L-glycero-beta-D-manno-heptose biosynthesis; ADP-L-glycero-beta-D-manno-heptose from D-glycero-beta-D-manno-heptose 7-phosphate: step 4/4. In terms of biological role, catalyzes the interconversion between ADP-D-glycero-beta-D-manno-heptose and ADP-L-glycero-beta-D-manno-heptose via an epimerization at carbon 6 of the heptose. The sequence is that of ADP-L-glycero-D-manno-heptose-6-epimerase from Cronobacter sakazakii (strain ATCC BAA-894) (Enterobacter sakazakii).